A 219-amino-acid chain; its full sequence is 7-carboxy-7-deazaguanine synthase (219 aa).

Residues 22–24 and arginine 37 each bind substrate; that span reads IQG. The region spanning 28-219 is the Radical SAM core domain; that stretch reads LVGLPSVFIR…PQVHKCFDLK (192 aa). Residues cysteine 41, cysteine 45, and cysteine 48 each contribute to the [4Fe-4S] cluster site. Threonine 81 provides a ligand contact to substrate. S-adenosyl-L-methionine is bound by residues glycine 83 and 130-132; that span reads SPK.

It belongs to the radical SAM superfamily. 7-carboxy-7-deazaguanine synthase family. Homodimer. It depends on [4Fe-4S] cluster as a cofactor. S-adenosyl-L-methionine serves as cofactor. Requires Mg(2+) as cofactor.

It catalyses the reaction 6-carboxy-5,6,7,8-tetrahydropterin + H(+) = 7-carboxy-7-deazaguanine + NH4(+). The protein operates within purine metabolism; 7-cyano-7-deazaguanine biosynthesis. In terms of biological role, catalyzes the complex heterocyclic radical-mediated conversion of 6-carboxy-5,6,7,8-tetrahydropterin (CPH4) to 7-carboxy-7-deazaguanine (CDG), a step common to the biosynthetic pathways of all 7-deazapurine-containing compounds. This Aquifex aeolicus (strain VF5) protein is 7-carboxy-7-deazaguanine synthase.